Here is a 290-residue protein sequence, read N- to C-terminus: Eukaryotic translation initiation factor 3 subunit G (290 aa).

A compositionally biased stretch (basic and acidic residues) spans 1–12; it reads MADSKQSNRDWA. Disordered stretches follow at residues 1 to 30 and 173 to 192; these read MADSKQSNRDWAADDVDADELPPTTESTDA and AGETGGKYVPPSQRAGATGA. Residues 204 to 285 enclose the RRM domain; it reads PTLRVTSLSI…LILEVAWSQP (82 aa).

It belongs to the eIF-3 subunit G family. As to quaternary structure, component of the eukaryotic translation initiation factor 3 (eIF-3) complex.

It localises to the cytoplasm. RNA-binding component of the eukaryotic translation initiation factor 3 (eIF-3) complex, which is involved in protein synthesis of a specialized repertoire of mRNAs and, together with other initiation factors, stimulates binding of mRNA and methionyl-tRNAi to the 40S ribosome. The eIF-3 complex specifically targets and initiates translation of a subset of mRNAs involved in cell proliferation. This subunit can bind 18S rRNA. This Cryptococcus neoformans var. neoformans serotype D (strain B-3501A) (Filobasidiella neoformans) protein is Eukaryotic translation initiation factor 3 subunit G.